The primary structure comprises 329 residues: Beta-ketoacyl-[acyl-carrier-protein] synthase III (329 aa).

Catalysis depends on residues cysteine 113 and histidine 255. The segment at 256 to 260 is ACP-binding; the sequence is QANQR. Asparagine 285 is a catalytic residue.

It belongs to the thiolase-like superfamily. FabH family. In terms of assembly, homodimer.

It localises to the cytoplasm. It catalyses the reaction malonyl-[ACP] + acetyl-CoA + H(+) = 3-oxobutanoyl-[ACP] + CO2 + CoA. Its pathway is lipid metabolism; fatty acid biosynthesis. Functionally, catalyzes the condensation reaction of fatty acid synthesis by the addition to an acyl acceptor of two carbons from malonyl-ACP. Catalyzes the first condensation reaction which initiates fatty acid synthesis and may therefore play a role in governing the total rate of fatty acid production. Possesses both acetoacetyl-ACP synthase and acetyl transacylase activities. Its substrate specificity determines the biosynthesis of branched-chain and/or straight-chain of fatty acids. This Chlorobium luteolum (strain DSM 273 / BCRC 81028 / 2530) (Pelodictyon luteolum) protein is Beta-ketoacyl-[acyl-carrier-protein] synthase III.